An 874-amino-acid chain; its full sequence is Alanine--tRNA ligase (874 aa).

Zn(2+) contacts are provided by H563, H567, C665, and H669.

It belongs to the class-II aminoacyl-tRNA synthetase family. The cofactor is Zn(2+).

It is found in the cytoplasm. The catalysed reaction is tRNA(Ala) + L-alanine + ATP = L-alanyl-tRNA(Ala) + AMP + diphosphate. Catalyzes the attachment of alanine to tRNA(Ala) in a two-step reaction: alanine is first activated by ATP to form Ala-AMP and then transferred to the acceptor end of tRNA(Ala). Also edits incorrectly charged Ser-tRNA(Ala) and Gly-tRNA(Ala) via its editing domain. The polypeptide is Alanine--tRNA ligase (Actinobacillus pleuropneumoniae serotype 5b (strain L20)).